Reading from the N-terminus, the 157-residue chain is Transcription elongation factor GreA (157 aa).

A coiled-coil region spans residues 1-75; it reads MSKEIILTQE…VETLINRAKV (75 aa).

This sequence belongs to the GreA/GreB family.

In terms of biological role, necessary for efficient RNA polymerase transcription elongation past template-encoded arresting sites. The arresting sites in DNA have the property of trapping a certain fraction of elongating RNA polymerases that pass through, resulting in locked ternary complexes. Cleavage of the nascent transcript by cleavage factors such as GreA or GreB allows the resumption of elongation from the new 3'terminus. GreA releases sequences of 2 to 3 nucleotides. This is Transcription elongation factor GreA from Mycoplasma mycoides subsp. mycoides SC (strain CCUG 32753 / NCTC 10114 / PG1).